The following is a 250-amino-acid chain: Probable replication-associated protein repA2 (250 aa).

Belongs to the IncFII RepA family.

Functionally, this protein is essential for plasmid replication; it is involved in copy control functions. In Buchnera aphidicola subsp. Acyrthosiphon pisum (strain APS) (Acyrthosiphon pisum symbiotic bacterium), this protein is Probable replication-associated protein repA2 (repA2).